Here is a 92-residue protein sequence, read N- to C-terminus: Serine rich endogenous peptide 11 (92 aa).

The N-terminal stretch at Met-1–Ser-29 is a signal peptide. Positions Pro-50–His-92 are disordered. Residues Asp-53–Asp-62 show a composition bias toward polar residues. Short sequence motifs (SCOOP motif) lie at residues Asp-53–Gly-67 and Gln-75–Arg-89. Short sequence motifs (sxS motif essential for MIK2 binding) lie at residues Ser-59–Ser-61 and Ser-81–Ser-83.

This sequence belongs to the serine rich endogenous peptide (SCOOP) phytocytokine family. Interacts with MIK2 (via extracellular leucine-rich repeat domain); this interaction triggers the formation of complex between MIK2 and the BAK1/SERK3 and SERK4 coreceptors, and subsequent BAK1 activation by phosphorylation. Mostly expressed in seedlings shoots and roots, and, to a lower extent, in leaves.

The protein resides in the cell membrane. The protein localises to the secreted. Its subcellular location is the extracellular space. It localises to the apoplast. In terms of biological role, brassicaceae-specific phytocytokine (plant endogenous peptide released into the apoplast) perceived by MIK2 in a BAK1/SERK3 and SERK4 coreceptors-dependent manner, that modulates various physiological and antimicrobial processes including growth prevention and reactive oxygen species (ROS) response regulation. The protein is Serine rich endogenous peptide 11 of Arabidopsis thaliana (Mouse-ear cress).